The following is a 533-amino-acid chain: Beta-1,4-mannosyl-glycoprotein 4-beta-N-acetylglucosaminyltransferase (533 aa).

At 1-7 (MKMRRYK) the chain is on the cytoplasmic side. A helical; Signal-anchor for type II membrane protein transmembrane segment spans residues 8–23 (LFLMFCMAGLCLISFL). Residues 24-533 (HFFKTLSYVT…ARGKLDEAEV (510 aa)) lie on the Lumenal side of the membrane. Residues 119–158 (KPGTKMLERPPPGRPEEKPEGANGSSARRPPRYLLSARER) form a disordered region. N-linked (GlcNAc...) asparagine glycans are attached at residues Asn-141, Asn-241, Asn-259, and Asn-397. Positions 507–533 (STAAGGWRHRGPEGRPPARGKLDEAEV) are disordered.

Belongs to the glycosyltransferase 17 family. In terms of assembly, interacts with MGAT4D.

The protein resides in the golgi apparatus membrane. The enzyme catalyses N(4)-{beta-D-GlcNAc-(1-&gt;2)-alpha-D-Man-(1-&gt;3)-[beta-D-GlcNAc-(1-&gt;2)-alpha-D-Man-(1-&gt;6)]-beta-D-Man-(1-&gt;4)-beta-D-GlcNAc-(1-&gt;4)-beta-D-GlcNAc}-L-asparaginyl-[protein] + UDP-N-acetyl-alpha-D-glucosamine = N(4)-{beta-D-GlcNAc-(1-&gt;2)-alpha-D-Man-(1-&gt;3)-[beta-D-GlcNAc-(1-&gt;4)]-[beta-D-GlcNAc-(1-&gt;2)-alpha-D-Man-(1-&gt;6)]-beta-D-Man-(1-&gt;4)-beta-D-GlcNAc-(1-&gt;4)-beta-D-GlcNAc}-L-asparaginyl-[protein] + UDP + H(+). It functions in the pathway protein modification; protein glycosylation. It is involved in the regulation of the biosynthesis and biological function of glycoprotein oligosaccharides. Catalyzes the addition of N-acetylglucosamine in beta 1-4 linkage to the beta-linked mannose of the trimannosyl core of N-linked sugar chains, called bisecting N-acetylglucosamine (GlcNAc). It is one of the most important enzymes involved in the regulation of the biosynthesis of glycoprotein oligosaccharides. The addition of this bisecting GlcNAc residue alters not only the composition, but also the conformation of the N-glycan. The introduction of the bisecting GlcNAc residue results in the suppression of further processing and elongation of N-glycans, precluding the formation of beta-1,6 GlcNAc branching, catalyzed by MGAT5 since it is unable to use the bisected oligosaccharide as a substrate. Addition of bisecting N-acetylglucosamine to CDH1/E-cadherin modulates CDH1 cell membrane location. Inhibits NeuAc-alpha-2,3-Gal-beta-1,4-GlcNAc- formation which modulates sialylation levels and plays a role in cell migration regulation. In brain, addition of bisecting N-acetylglucosamine to BACE1 blocks its lysosomal targeting in response to oxidative stress and further degradation which increases its location to early endosome and the APP cleavage. The chain is Beta-1,4-mannosyl-glycoprotein 4-beta-N-acetylglucosaminyltransferase from Homo sapiens (Human).